Consider the following 129-residue polypeptide: Small ribosomal subunit protein uS11 (129 aa).

This sequence belongs to the universal ribosomal protein uS11 family. In terms of assembly, part of the 30S ribosomal subunit. Interacts with proteins S7 and S18. Binds to IF-3.

Its function is as follows. Located on the platform of the 30S subunit, it bridges several disparate RNA helices of the 16S rRNA. Forms part of the Shine-Dalgarno cleft in the 70S ribosome. The polypeptide is Small ribosomal subunit protein uS11 (Erythrobacter litoralis (strain HTCC2594)).